The following is a 384-amino-acid chain: tRNA-dihydrouridine(20) synthase [NAD(P)+] (384 aa).

Residues 12–14 (PMV) and Gln-88 each bind FMN. Cys-117 functions as the Proton donor in the catalytic mechanism. FMN is bound by residues Lys-160, His-188, 222 to 224 (NGA), and 249 to 250 (AE). Residues 359–384 (KQKRKQTDHIGSDTKKQKVVPLPTDI) form a disordered region. A compositionally biased stretch (basic and acidic residues) spans 363–374 (KQTDHIGSDTKK).

Belongs to the Dus family. Dus2 subfamily. As to quaternary structure, monomer. FMN is required as a cofactor. N-glycosylated.

Its subcellular location is the cytoplasm. It localises to the nucleus. The enzyme catalyses 5,6-dihydrouridine(20) in tRNA + NADP(+) = uridine(20) in tRNA + NADPH + H(+). It catalyses the reaction 5,6-dihydrouridine(20) in tRNA + NAD(+) = uridine(20) in tRNA + NADH + H(+). It carries out the reaction a 5,6-dihydrouridine in mRNA + NAD(+) = a uridine in mRNA + NADH + H(+). The catalysed reaction is a 5,6-dihydrouridine in mRNA + NADP(+) = a uridine in mRNA + NADPH + H(+). Catalyzes the NADPH-dependent synthesis of dihydrouridine, a modified base found in the D-loop of most tRNAs. Specifically modifies U20 in cytoplasmic tRNAs. Also able to mediate dihydrouridylation of some mRNAs, thereby affecting their translation. The polypeptide is tRNA-dihydrouridine(20) synthase [NAD(P)+] (SMM1) (Saccharomyces cerevisiae (strain ATCC 204508 / S288c) (Baker's yeast)).